Here is a 242-residue protein sequence, read N- to C-terminus: Probable inactive serine protease 58 (242 aa).

The signal sequence occupies residues 1–17 (MNLILLWALLNLPVALT). Positions 18 to 240 (FDPNYKDDIT…YIPWIENTIQ (223 aa)) constitute a Peptidase S1 domain. 4 cysteine pairs are disulfide-bonded: Cys41–Cys57, Cys134–Cys202, Cys166–Cys181, and Cys192–Cys216. A glycan (N-linked (GlcNAc...) asparagine) is linked at Asn157.

It belongs to the peptidase S1 family.

The protein localises to the secreted. This Bos taurus (Bovine) protein is Probable inactive serine protease 58 (PRSS58).